We begin with the raw amino-acid sequence, 349 residues long: tRNA pseudouridine synthase D (349 aa).

Phe26 contributes to the substrate binding site. Asp79 functions as the Nucleophile in the catalytic mechanism. Asn128 is a binding site for substrate. The 149-residue stretch at 154–302 folds into the TRUD domain; it reads GVPNYFGSQR…VEGARRAILL (149 aa). Phe328 contacts substrate.

It belongs to the pseudouridine synthase TruD family.

It carries out the reaction uridine(13) in tRNA = pseudouridine(13) in tRNA. In terms of biological role, responsible for synthesis of pseudouridine from uracil-13 in transfer RNAs. This is tRNA pseudouridine synthase D from Yersinia enterocolitica serotype O:8 / biotype 1B (strain NCTC 13174 / 8081).